Consider the following 188-residue polypeptide: Apolipoprotein M (188 aa).

Positions 1–22 (MFHQIWAALLYFYGIILNSIYQ) form a signal peptide, not cleaved. 3 disulfide bridges follow: Cys23–Cys167, Cys95–Cys183, and Cys128–Cys157. Asn135 carries an N-linked (GlcNAc...) asparagine glycan. Tetradecanoate contacts are provided by Glu136 and Arg143.

This sequence belongs to the calycin superfamily. Lipocalin family. Highly divergent. In terms of assembly, interacts with LRP2; LRP2 mediates APOM renal uptake and subsequent lysosomal degradation. As to expression, plasma protein. Expressed in liver and kidney.

The protein localises to the secreted. In terms of biological role, probably involved in lipid transport. Can bind sphingosine-1-phosphate, myristic acid, palmitic acid and stearic acid, retinol, all-trans-retinoic acid and 9-cis-retinoic acid. This Homo sapiens (Human) protein is Apolipoprotein M (APOM).